The sequence spans 292 residues: Protease HtpX (292 aa).

A run of 2 helical transmembrane segments spans residues 5-25 (IFLF…VMSV) and 34-54 (SGLL…SLLL). Histidine 140 contributes to the Zn(2+) binding site. The active site involves glutamate 141. Histidine 144 is a binding site for Zn(2+). The next 2 membrane-spanning stretches (helical) occupy residues 155–175 (LLQG…GGII) and 193–213 (IIVF…AMWF). Glutamate 218 is a Zn(2+) binding site.

The protein belongs to the peptidase M48B family. It depends on Zn(2+) as a cofactor.

Its subcellular location is the cell inner membrane. The polypeptide is Protease HtpX (Xanthomonas oryzae pv. oryzae (strain MAFF 311018)).